The chain runs to 224 residues: Small ribosomal subunit protein eS1 (224 aa).

This sequence belongs to the eukaryotic ribosomal protein eS1 family.

This is Small ribosomal subunit protein eS1 from Methanococcus maripaludis (strain C7 / ATCC BAA-1331).